The following is a 145-amino-acid chain: Ribonuclease HI (145 aa).

The 142-residue stretch at 1–142 (MNQTVYLYTD…ADDLANRGAA (142 aa)) folds into the RNase H type-1 domain. Residues D10, E48, D70, and D134 each coordinate Mg(2+).

It belongs to the RNase H family. Monomer. The cofactor is Mg(2+).

Its subcellular location is the cytoplasm. It catalyses the reaction Endonucleolytic cleavage to 5'-phosphomonoester.. Its function is as follows. Endonuclease that specifically degrades the RNA of RNA-DNA hybrids. This Neisseria meningitidis serogroup A / serotype 4A (strain DSM 15465 / Z2491) protein is Ribonuclease HI.